Here is a 158-residue protein sequence, read N- to C-terminus: MTELKLIHIFTDGSCLGNPGPGGYGIVMNYKGHTKEMSDGFSLTTNNRMELLAPIVALEALKEPCKIILTSDSQYMRQGIMTWIHGWKKKGWMTSNRTPVKNVDLWKRLDKAAQLHQIDWRWVKGHAGHAENERCDQLARAAAEANPTQIDTGYQAES.

Residues 3 to 144 enclose the RNase H type-1 domain; it reads ELKLIHIFTD…CDQLARAAAE (142 aa). 4 residues coordinate Mg(2+): Asp12, Glu50, Asp72, and Asp136.

The protein belongs to the RNase H family. In terms of assembly, monomer. It depends on Mg(2+) as a cofactor.

The protein localises to the cytoplasm. The enzyme catalyses Endonucleolytic cleavage to 5'-phosphomonoester.. Functionally, endonuclease that specifically degrades the RNA of RNA-DNA hybrids. This is Ribonuclease HI from Shewanella oneidensis (strain ATCC 700550 / JCM 31522 / CIP 106686 / LMG 19005 / NCIMB 14063 / MR-1).